Consider the following 223-residue polypeptide: Uracil-DNA glycosylase (223 aa).

D61 serves as the catalytic Proton acceptor.

Belongs to the uracil-DNA glycosylase (UDG) superfamily. UNG family.

It localises to the cytoplasm. The catalysed reaction is Hydrolyzes single-stranded DNA or mismatched double-stranded DNA and polynucleotides, releasing free uracil.. Its function is as follows. Excises uracil residues from the DNA which can arise as a result of misincorporation of dUMP residues by DNA polymerase or due to deamination of cytosine. The sequence is that of Uracil-DNA glycosylase from Histophilus somni (strain 129Pt) (Haemophilus somnus).